The following is a 162-amino-acid chain: Phosphopantetheine adenylyltransferase (162 aa).

Residue Ser-9 coordinates substrate. Residues 9-10 (SF) and His-17 contribute to the ATP site. The substrate site is built by Lys-41, Leu-73, and Lys-87. ATP contacts are provided by residues 88-90 (GLR), Glu-98, and 123-129 (YAHLSSS).

The protein belongs to the bacterial CoaD family. Homohexamer. The cofactor is Mg(2+).

The protein resides in the cytoplasm. It catalyses the reaction (R)-4'-phosphopantetheine + ATP + H(+) = 3'-dephospho-CoA + diphosphate. Its pathway is cofactor biosynthesis; coenzyme A biosynthesis; CoA from (R)-pantothenate: step 4/5. Its function is as follows. Reversibly transfers an adenylyl group from ATP to 4'-phosphopantetheine, yielding dephospho-CoA (dPCoA) and pyrophosphate. This is Phosphopantetheine adenylyltransferase from Symbiobacterium thermophilum (strain DSM 24528 / JCM 14929 / IAM 14863 / T).